We begin with the raw amino-acid sequence, 463 residues long: Interstitial collagenase B (463 aa).

Residues M1 to S17 form the signal peptide. Positions F18–P96 are cleaved as a propeptide — activation peptide. The Cysteine switch motif lies at P87–V94. C89 is a binding site for Zn(2+). A metalloprotease region spans residues A95–D273. D155 lines the Ca(2+) pocket. The Zn(2+) site is built by H165 and D167. Ca(2+) contacts are provided by D172 and G173. Residue H180 coordinates Zn(2+). Residues G187 and G189 each coordinate Ca(2+). A Zn(2+)-binding site is contributed by H193. D195 is a Ca(2+) binding site. Residue H215 coordinates Zn(2+). The active site involves E216. Zn(2+) is bound by residues H219 and H225. A disulfide bond links C275 and C463. Hemopexin repeat units follow at residues G278–L321 and P322–P368. D282 serves as a coordination point for Ca(2+). N370 is a glycosylation site (N-linked (GlcNAc...) asparagine). 2 Hemopexin repeats span residues V371 to I419 and D420 to C463. Residues D375 and D424 each coordinate Ca(2+).

It belongs to the peptidase M10A family. It depends on Ca(2+) as a cofactor. Zn(2+) is required as a cofactor.

It localises to the secreted. The protein resides in the extracellular space. The protein localises to the extracellular matrix. It carries out the reaction Cleavage of the triple helix of collagen at about three-quarters of the length of the molecule from the N-terminus, at 775-Gly-|-Ile-776 in the alpha1(I) chain. Cleaves synthetic substrates and alpha-macroglobulins at bonds where P1' is a hydrophobic residue.. Its activity is regulated as follows. Can be activated without removal of the activation peptide. This chain is Interstitial collagenase B (Mmp1b), found in Mus musculus (Mouse).